The chain runs to 560 residues: Dihydroxy-acid dehydratase (560 aa).

Residue C50 coordinates [2Fe-2S] cluster. D82 contacts Mg(2+). Position 123 (C123) interacts with [2Fe-2S] cluster. D124 and K125 together coordinate Mg(2+). K125 carries the N6-carboxylysine modification. C195 lines the [2Fe-2S] cluster pocket. Residue E446 coordinates Mg(2+). The active-site Proton acceptor is the S472.

Belongs to the IlvD/Edd family. In terms of assembly, homodimer. [2Fe-2S] cluster is required as a cofactor. Requires Mg(2+) as cofactor.

The enzyme catalyses (2R)-2,3-dihydroxy-3-methylbutanoate = 3-methyl-2-oxobutanoate + H2O. It catalyses the reaction (2R,3R)-2,3-dihydroxy-3-methylpentanoate = (S)-3-methyl-2-oxopentanoate + H2O. It participates in amino-acid biosynthesis; L-isoleucine biosynthesis; L-isoleucine from 2-oxobutanoate: step 3/4. The protein operates within amino-acid biosynthesis; L-valine biosynthesis; L-valine from pyruvate: step 3/4. In terms of biological role, functions in the biosynthesis of branched-chain amino acids. Catalyzes the dehydration of (2R,3R)-2,3-dihydroxy-3-methylpentanoate (2,3-dihydroxy-3-methylvalerate) into 2-oxo-3-methylpentanoate (2-oxo-3-methylvalerate) and of (2R)-2,3-dihydroxy-3-methylbutanoate (2,3-dihydroxyisovalerate) into 2-oxo-3-methylbutanoate (2-oxoisovalerate), the penultimate precursor to L-isoleucine and L-valine, respectively. This is Dihydroxy-acid dehydratase from Leptothrix cholodnii (strain ATCC 51168 / LMG 8142 / SP-6) (Leptothrix discophora (strain SP-6)).